The primary structure comprises 540 residues: Chaperonin GroEL (540 aa).

ATP contacts are provided by residues 29–32 (TIGP), 86–90 (DGTTT), G413, 476–478 (NAA), and D492.

The protein belongs to the chaperonin (HSP60) family. Forms a cylinder of 14 subunits composed of two heptameric rings stacked back-to-back. Interacts with the co-chaperonin GroES.

It is found in the cytoplasm. The enzyme catalyses ATP + H2O + a folded polypeptide = ADP + phosphate + an unfolded polypeptide.. Its function is as follows. Together with its co-chaperonin GroES, plays an essential role in assisting protein folding. The GroEL-GroES system forms a nano-cage that allows encapsulation of the non-native substrate proteins and provides a physical environment optimized to promote and accelerate protein folding. The polypeptide is Chaperonin GroEL (Staphylococcus carnosus (strain TM300)).